A 782-amino-acid polypeptide reads, in one-letter code: Formin-like protein 9 (782 aa).

The N-terminal stretch at 1–24 (MQNFWFAIFFFLLTCAPPSPLSYA) is a signal peptide. Residues 102–122 (LLLPALSAVLVIATVIGLALF) form a helical membrane-spanning segment. 3 disordered regions span residues 191-223 (DSPE…EEEE), 264-287 (MSPP…RLRV), and 387-407 (SSSQ…PPLV). The span at 214–223 (EVNEEDEEEE) shows a compositional bias: acidic residues. Pro residues predominate over residues 396–407 (ALPPPTRPPPLV). Residues 406–782 (LVPPSQPFVV…LDQVCKEMGD (377 aa)) form the FH2 domain.

Belongs to the formin-like family. Class-I subfamily.

The protein resides in the membrane. Its function is as follows. Might be involved in the organization and polarity of the actin cytoskeleton. In Arabidopsis thaliana (Mouse-ear cress), this protein is Formin-like protein 9 (FH9).